Reading from the N-terminus, the 746-residue chain is Disintegrin and metalloproteinase domain-containing protein 18 (746 aa).

An N-terminal signal peptide occupies residues 1 to 16 (MFFLLALLTELGRLQA). A propeptide spanning residues 17–183 (HVGSEGIFLH…QKKNLSKLLP (167 aa)) is cleaved from the precursor. N-linked (GlcNAc...) asparagine glycosylation is found at Asn-36, Asn-122, Asn-149, Asn-156, Asn-177, and Asn-294. Topologically, residues 177–687 (NLSKLLPQYL…EKGYNAHWNN (511 aa)) are extracellular. Positions 184–381 (QYLEIYIIVE…FEAKCLQKLS (198 aa)) constitute a Peptidase M12B domain. Intrachain disulfides connect Cys-293-Cys-376, Cys-335-Cys-360, Cys-337-Cys-342, and Cys-450-Cys-471. N-linked (GlcNAc...) asparagine glycosylation is found at Asn-359, Asn-465, Asn-611, and Asn-625. In terms of domain architecture, Disintegrin spans 390-479 (QPVCGNGILE…DCVPDTYALN (90 aa)). The region spanning 620–654 (TGYNCNTTTKCKGKGICNNFGNCQCFPGHKPPDCK) is the EGF-like domain. Cystine bridges form between Cys-624–Cys-636, Cys-630–Cys-642, and Cys-644–Cys-653. The helical transmembrane segment at 688–708 (WFILSFYIVLPFFIIFTIVIF) threads the bilayer. Residues 709–746 (KRNEIRKLCNRENTELIHPLYQKAMMWNINIAQNFRSK) are Cytoplasmic-facing.

In terms of processing, the prodomain and the metalloprotease-like domain are cleaved during the epididymal maturation of the spermatozoa. As to expression, expressed predominantly in adult and prepubertal testis.

Its subcellular location is the membrane. Functionally, sperm surface membrane protein that may be involved in spermatogenesis and fertilization. This is a non catalytic metalloprotease-like protein. In Macaca fascicularis (Crab-eating macaque), this protein is Disintegrin and metalloproteinase domain-containing protein 18 (ADAM18).